The chain runs to 63 residues: Small ribosomal subunit protein bS21 (63 aa).

Belongs to the bacterial ribosomal protein bS21 family.

The protein is Small ribosomal subunit protein bS21 of Porphyromonas gingivalis (strain ATCC BAA-308 / W83).